Consider the following 527-residue polypeptide: Gustatory receptor for bitter taste 66a (527 aa).

The Cytoplasmic segment spans residues 1–46 (MAQAEDAVQPLLQQFQQLFFISKIAGILPQDLEKFRSRNLLEKSRN). Residues 47 to 67 (GMIYMLSTLILYVVLYNILIY) form a helical membrane-spanning segment. Topologically, residues 68–80 (SFGEEDRSLKASQ) are extracellular. The helical transmembrane segment at 81 to 101 (STLTFVIGLFLTYIGLIMMVS) threads the bilayer. Residues 102–144 (DQLTALRNQGRIGELYERIRLVDERLYKEGCVMDNSTIGRRIR) are Cytoplasmic-facing. The helical transmembrane segment at 145-165 (IMLIMTVIFELSILVSTYVKL) threads the bilayer. At 166–174 (VDYSQWMSL) the chain is on the extracellular side. The chain crosses the membrane as a helical span at residues 175–195 (LWIVSAIPTFINTLDKIWFAV). The Cytoplasmic segment spans residues 196-345 (SLYALKERFE…KALNELWSYP (150 aa)). The chain crosses the membrane as a helical span at residues 346-366 (ILSLMAYGFLIFTAQLYFLYC). Topologically, residues 367–382 (ATQYQSIPSLFRSAKN) are extracellular. Residues 383 to 403 (PFITVIVLSYTSGKCVYLIYL) traverse the membrane as a helical segment. The Cytoplasmic portion of the chain corresponds to 404–460 (SWKTSQASKRTGISLHKCGVVADDNLLYEIVNHLSLKLLNHSVDFSACGFFTLDMET). The chain crosses the membrane as a helical span at residues 461 to 481 (LYGVSGGITSYLIILIQFNLA). Residues 482-527 (AQQAKEAIQTFNSLNDTAGLVGAATDMDNISSTLRDFVTTTMTPAV) are Extracellular-facing. N496 and N510 each carry an N-linked (GlcNAc...) asparagine glycan.

It belongs to the insect chemoreceptor superfamily. Gustatory receptor (GR) family. Gr66a subfamily. Taste hairs in labial palps, labral and cibarial sense organs and forelegs. In larvae, is expressed in neurons of the terminal external chemosensory organ, as well as in the dorsal, ventral, and posterior pharyngeal sense organs.

Its subcellular location is the cell membrane. Functionally, gustatory receptor required for response to the bitter in taste neurons. Gr66a cells respond to bitter compounds such as caffeine, theophylline, threonine or valine. Flies avoid bitter substances, suggesting that Gr66a neuron activity is sufficient to mediate avoidance behavior. Required for sensing and avoiding N,N-Diethyl-meta-toluamide (DEET), the most widely used insect repellent worldwide, as well as to L-canavanine, a plant-derived insecticide. Gr66a neurons are also involved in the sex-specific perception of molecules inducing male avoidance behavior, probably through sensing 7-tricosene (7-T), a male cuticular pheromone and leading to inhibition of male-male courtship. Finally, also plays a role in oviposition behavior, in which females evaluate their environment and choose to lay eggs on substrates they may find aversive in other contexts. This Drosophila melanogaster (Fruit fly) protein is Gustatory receptor for bitter taste 66a (Gr66a).